Here is a 534-residue protein sequence, read N- to C-terminus: Nitrate/nitrite transporter NrtP (534 aa).

12 helical membrane passes run 19–39 (WFAF…ATTI), 52–72 (TIGL…GMLL), 79–99 (LTYS…ATAQ), 109–129 (LLMG…AEWF), 150–170 (AFSA…PGAF), 195–215 (AAIA…YFSV), 240–260 (DFWF…VLAW), 266–286 (NFLN…LYLF), 382–404 (WTMV…VAGT), 409–431 (IAVL…TFAI), 445–465 (GNVG…LLLL), and 485–505 (GFFQ…AFFL).

The protein belongs to the major facilitator superfamily. Nitrate/nitrite porter (TC 2.A.1.8) family.

Its subcellular location is the cell inner membrane. High-efficiency transport system for both nitrate and nitrite. This chain is Nitrate/nitrite transporter NrtP, found in Picosynechococcus sp. (strain ATCC 27264 / PCC 7002 / PR-6) (Agmenellum quadruplicatum).